The primary structure comprises 348 residues: Protein RecA (348 aa).

ATP is bound at residue 65–72; it reads GPESSGKT. The disordered stretch occupies residues 326–348; sequence QMGSESLSSSSDDDDIKEESGEE. Acidic residues predominate over residues 336–348; that stretch reads SDDDDIKEESGEE.

This sequence belongs to the RecA family.

Its subcellular location is the cytoplasm. Can catalyze the hydrolysis of ATP in the presence of single-stranded DNA, the ATP-dependent uptake of single-stranded DNA by duplex DNA, and the ATP-dependent hybridization of homologous single-stranded DNAs. It interacts with LexA causing its activation and leading to its autocatalytic cleavage. This chain is Protein RecA, found in Campylobacter hominis (strain ATCC BAA-381 / DSM 21671 / CCUG 45161 / LMG 19568 / NCTC 13146 / CH001A).